We begin with the raw amino-acid sequence, 878 residues long: Alanine--tRNA ligase (878 aa).

Residues His-567, His-571, Cys-669, and His-673 each coordinate Zn(2+).

It belongs to the class-II aminoacyl-tRNA synthetase family. Requires Zn(2+) as cofactor.

It is found in the cytoplasm. It catalyses the reaction tRNA(Ala) + L-alanine + ATP = L-alanyl-tRNA(Ala) + AMP + diphosphate. Catalyzes the attachment of alanine to tRNA(Ala) in a two-step reaction: alanine is first activated by ATP to form Ala-AMP and then transferred to the acceptor end of tRNA(Ala). Also edits incorrectly charged Ser-tRNA(Ala) and Gly-tRNA(Ala) via its editing domain. This chain is Alanine--tRNA ligase, found in Rickettsia canadensis (strain McKiel).